The following is a 754-amino-acid chain: MAKPKKGAKVNNPNRKSRNQKVLQTIADLQKRIDEYDPATDEQSISQFKHLPISEGTYKGLLENNFVSLTDIQKKAIPVALKSEDVMGTARTGSGKTLAFLVPVIEKLIRENITEYDGLAALIVSPTRELAVQTFEVLTKIGKYNSFSAGLVTGGKDVKYEKERISRMNILIGTPGRISQHLNEAVGMETSNLQVLVLDEADRCLDMGFRKQIDNILGHLPVTRQTLLFSATQSDNVKDLARLSLVNPKRVGVSSDQEVSSIPESLEQYYIKISLASKMDVLWSFLKSHLKSKILVFFSSSKQVQFAYEAFRRLQPGISLLKLYGRHKQTSRLETTMKFSRAQHACLFATDIVARGLDFPAIDWVVQVDCPEDAATYVHRVGRAARFGRQGKSLLMLAPSEEEGMVKRLEAHKISLKMMNIKQKNKKVISPQLQSLCFQDPELKNLGQRAFISYMKSVHIQKDKDIFKVEELPAAEYAKALGLPGTPNINIKNGAGNKDKKNMSRELLALQKPEKQKSDSEKVRTKYDRMFERQNQTVLSKNYLNMAAGDDSGSEDDFMSVKRKDHIIKDEELPDLSVPVSKRQSKKALSKKASLKSKGNPTKLIFDDEGVTHHLYEFEDEEDFKSRGDAKLQKAEFVSKENEAMSKADVDDKATAREKRQEKKRRWKEQERLAREQDEFSGSEDEAHTVTLAGADIDRDMDYGRSSEDEQPPSKKPKWFEQEKPKKKKVDIVEVEEPETLEDLEALTAKLIGS.

The interval 1–22 (MAKPKKGAKVNNPNRKSRNQKV) is disordered. Positions 46–74 (SQFKHLPISEGTYKGLLENNFVSLTDIQK) match the Q motif motif. Residues 77–251 (IPVALKSEDV…RLSLVNPKRV (175 aa)) enclose the Helicase ATP-binding domain. 90 to 97 (ARTGSGKT) serves as a coordination point for ATP. The short motif at 199–202 (DEAD) is the DEAD box element. The Helicase C-terminal domain maps to 265–429 (SLEQYYIKIS…NIKQKNKKVI (165 aa)). Disordered stretches follow at residues 575-604 (DLSV…PTKL) and 638-731 (VSKE…KKVD). The segment covering 583–595 (RQSKKALSKKASL) has biased composition (basic residues). 3 stretches are compositionally biased toward basic and acidic residues: residues 638 to 661 (VSKE…EKRQ), 668 to 678 (KEQERLAREQD), and 696 to 708 (DIDR…RSSE).

Belongs to the DEAD box helicase family. DDX10/DBP4 subfamily. Interacts with the U3 and U14 snoRNAs. Associates with pre-ribosomal complexes.

It localises to the nucleus. The protein resides in the nucleolus. It carries out the reaction ATP + H2O = ADP + phosphate + H(+). Functionally, ATP-dependent RNA helicase required for ribosome biogenesis. Involved in the release of U14 snoRNA in pre-ribosomal complexes. Required for pre-rRNA cleavage at site A2. This is ATP-dependent RNA helicase DBP4 (DBP4) from Meyerozyma guilliermondii (strain ATCC 6260 / CBS 566 / DSM 6381 / JCM 1539 / NBRC 10279 / NRRL Y-324) (Yeast).